The following is a 474-amino-acid chain: tRNA modification GTPase MnmE (474 aa).

(6S)-5-formyl-5,6,7,8-tetrahydrofolate-binding residues include R35, E92, and K135. The 166-residue stretch at 231–396 (GLHVVLAGQP…LRAALLEIAG (166 aa)) folds into the TrmE-type G domain. Residue N241 coordinates K(+). GTP contacts are provided by residues 241 to 246 (NVGKSS), 260 to 266 (TPIAGTT), 285 to 288 (DTAG), and 377 to 379 (SAR). Mg(2+) is bound at residue S245. K(+) contacts are provided by T260, I262, and T265. Residue T266 coordinates Mg(2+). K474 serves as a coordination point for (6S)-5-formyl-5,6,7,8-tetrahydrofolate.

It belongs to the TRAFAC class TrmE-Era-EngA-EngB-Septin-like GTPase superfamily. TrmE GTPase family. As to quaternary structure, homodimer. Heterotetramer of two MnmE and two MnmG subunits. K(+) is required as a cofactor.

Its subcellular location is the cytoplasm. Functionally, exhibits a very high intrinsic GTPase hydrolysis rate. Involved in the addition of a carboxymethylaminomethyl (cmnm) group at the wobble position (U34) of certain tRNAs, forming tRNA-cmnm(5)s(2)U34. In Ralstonia nicotianae (strain ATCC BAA-1114 / GMI1000) (Ralstonia solanacearum), this protein is tRNA modification GTPase MnmE.